Reading from the N-terminus, the 196-residue chain is Aequorin-1 (196 aa).

A propeptide spanning residues 1 to 7 (MTSEQYS) is cleaved from the precursor. 4 consecutive EF-hand domains span residues 18–53 (KWIGRHKHMFNFLDVNHNGRISLDEMVYKASDIVIN), 54–108 (NLGA…SKNQ), 111–146 (LIRLWGDALFDIIDKDQNGAISLDEWKAYTKSDGII), and 147–182 (QSSEDCEETFRVCDIDESGQLDVDEMTRQHLGFWYT). Residues Asp-31, Asn-33, Asn-35, Arg-37, and Glu-42 each coordinate Ca(2+). 3 may interact with the chromophore regions span residues 47–57 (ASDIVINNLGA), 62–72 (AKRHKDAVEAF), and 107–117 (NQITLIRLWGD). Asp-124, Asp-126, Asn-128, Glu-135, Asp-160, Asp-162, Ser-164, Gln-166, and Glu-171 together coordinate Ca(2+).

The protein belongs to the aequorin family. The reduction of the disulfide bond is necessary to regenerate aequorin from apoaequorin.

Ca(2+)-dependent bioluminescence photoprotein. Displays an emission peak at 470 nm (blue light). Trace amounts of calcium ion trigger the intramolecular oxidation of the chromophore, coelenterazine into coelenteramide and CO(2) with the concomitant emission of light. The chain is Aequorin-1 from Aequorea victoria (Water jellyfish).